Here is a 52-residue protein sequence, read N- to C-terminus: UPF0391 membrane protein ABAYE0050 (52 aa).

2 consecutive transmembrane segments (helical) span residues 6 to 26 (IIFA…VAGL) and 30 to 50 (FAVI…ISRG).

This sequence belongs to the UPF0391 family.

It localises to the cell membrane. This Acinetobacter baumannii (strain AYE) protein is UPF0391 membrane protein ABAYE0050.